We begin with the raw amino-acid sequence, 366 residues long: tRNA-specific 2-thiouridylase MnmA (366 aa).

ATP contacts are provided by residues 10-17 (GLSGGVDS) and M36. The interaction with target base in tRNA stretch occupies residues 96–98 (NPD). C101 serves as the catalytic Nucleophile. C101 and C197 are joined by a disulfide. Residue G125 coordinates ATP. An interaction with tRNA region spans residues 147 to 149 (KDQ). The active-site Cysteine persulfide intermediate is the C197. Positions 309–310 (RY) are interaction with tRNA.

It belongs to the MnmA/TRMU family.

The protein resides in the cytoplasm. The enzyme catalyses S-sulfanyl-L-cysteinyl-[protein] + uridine(34) in tRNA + AH2 + ATP = 2-thiouridine(34) in tRNA + L-cysteinyl-[protein] + A + AMP + diphosphate + H(+). Its function is as follows. Catalyzes the 2-thiolation of uridine at the wobble position (U34) of tRNA, leading to the formation of s(2)U34. This Alkalilimnicola ehrlichii (strain ATCC BAA-1101 / DSM 17681 / MLHE-1) protein is tRNA-specific 2-thiouridylase MnmA.